The sequence spans 639 residues: Putative cyclic beta-1,2-glucan modification protein (639 aa).

Helical transmembrane passes span 34–54 (ALFT…IVRW), 69–89 (PAWT…ALFG), 96–116 (LLIA…QVFL), 144–164 (WTAV…ALLL), 185–205 (FALP…FSWI), and 227–247 (FALA…AGYM).

Its subcellular location is the cell membrane. This chain is Putative cyclic beta-1,2-glucan modification protein (cgmA), found in Rhizobium meliloti (strain 1021) (Ensifer meliloti).